Reading from the N-terminus, the 152-residue chain is SsrA-binding protein (152 aa).

The protein belongs to the SmpB family.

It is found in the cytoplasm. In terms of biological role, required for rescue of stalled ribosomes mediated by trans-translation. Binds to transfer-messenger RNA (tmRNA), required for stable association of tmRNA with ribosomes. tmRNA and SmpB together mimic tRNA shape, replacing the anticodon stem-loop with SmpB. tmRNA is encoded by the ssrA gene; the 2 termini fold to resemble tRNA(Ala) and it encodes a 'tag peptide', a short internal open reading frame. During trans-translation Ala-aminoacylated tmRNA acts like a tRNA, entering the A-site of stalled ribosomes, displacing the stalled mRNA. The ribosome then switches to translate the ORF on the tmRNA; the nascent peptide is terminated with the 'tag peptide' encoded by the tmRNA and targeted for degradation. The ribosome is freed to recommence translation, which seems to be the essential function of trans-translation. The chain is SsrA-binding protein from Rickettsia massiliae (strain Mtu5).